The chain runs to 288 residues: Energy-coupling factor transporter ATP-binding protein EcfA2 (288 aa).

In terms of domain architecture, ABC transporter spans 3–246; it reads IKLEQLGYCY…PDALVDLGLS (244 aa). 40-47 provides a ligand contact to ATP; that stretch reads GHTGSGKS.

The protein belongs to the ABC transporter superfamily. Energy-coupling factor EcfA family. Forms a stable energy-coupling factor (ECF) transporter complex composed of 2 membrane-embedded substrate-binding proteins (S component), 2 ATP-binding proteins (A component) and 2 transmembrane proteins (T component).

It is found in the cell membrane. ATP-binding (A) component of a common energy-coupling factor (ECF) ABC-transporter complex. Unlike classic ABC transporters this ECF transporter provides the energy necessary to transport a number of different substrates. The polypeptide is Energy-coupling factor transporter ATP-binding protein EcfA2 (Listeria welshimeri serovar 6b (strain ATCC 35897 / DSM 20650 / CCUG 15529 / CIP 8149 / NCTC 11857 / SLCC 5334 / V8)).